The following is a 269-amino-acid chain: Protein CURLY FLAG LEAF 1 (269 aa).

The segment at 17–44 (SLNGGGGGGGGRRRGRRAAAAEGSDDSE) is disordered. Positions 47–52 (TVELNS) match the EAR motif. Residues 54-88 (VALPYHWEQCLDIRTGQVYYINWEDGTRTTIDPRS) enclose the WW domain. Disordered stretches follow at residues 83-133 (TIDP…SGYT) and 174-218 (GDDE…SGAG). 3 stretches are compositionally biased toward low complexity: residues 87-106 (RSSS…SSSR), 121-133 (AAAA…SGYT), and 180-202 (SSSS…AVSS). Residues 203-212 (TLSSFSPTDE) are compositionally biased toward polar residues.

Binds to HDG1.

Functionally, negatively regulates the cuticle development probably by interacting with the HD-ZIP IV transcription factor HDG1. This chain is Protein CURLY FLAG LEAF 1, found in Oryza sativa subsp. indica (Rice).